A 464-amino-acid chain; its full sequence is Capsule biosynthesis protein CapB (464 aa).

The helical transmembrane segment at Leu65–Trp85 threads the bilayer.

Its subcellular location is the cell membrane. It functions in the pathway capsule biogenesis; capsule polysaccharide biosynthesis. Essential for the synthesis of the polyglutamate capsule of B.anthracis which is one of the principal virulence factors during anthrax infection. May form a polyglutamyl synthetase complex together with proteins CapA and CapC. The polypeptide is Capsule biosynthesis protein CapB (capB) (Bacillus anthracis).